A 353-amino-acid polypeptide reads, in one-letter code: Guanine nucleotide-binding protein G(q) subunit alpha (353 aa).

2 S-palmitoyl cysteine lipidation sites follow: Cys-3 and Cys-4. The G-alpha domain occupies Arg-32–Val-353. The G1 motif stretch occupies residues Lys-35–Thr-48. GTP-binding positions include Gly-40–Ser-47, Leu-174–Thr-180, Asp-199–Gln-203, Asn-268–Asp-271, and Ala-325. Mg(2+)-binding residues include Ser-47 and Thr-180. A G2 motif region spans residues Asp-172–Thr-180. The interval Phe-195–Arg-204 is G3 motif. Residues Ile-264–Asp-271 are G4 motif. The segment at Thr-323 to Thr-328 is G5 motif.

Belongs to the G-alpha family. G(q) subfamily. G proteins are composed of 3 units; alpha, beta and gamma. The alpha chain contains the guanine nucleotide binding site.

Guanine nucleotide-binding proteins (G proteins) are involved as modulators or transducers in various transmembrane signaling systems. The chain is Guanine nucleotide-binding protein G(q) subunit alpha from Homarus americanus (American lobster).